Consider the following 164-residue polypeptide: Sorting nexin-3 (164 aa).

The PX domain occupies 40 to 163 (EIEVCNPKTH…VRFIQDPTFQ (124 aa)). A 1,2-diacyl-sn-glycero-3-phospho-(1D-myo-inositol-3-phosphate) is bound by residues Arg-83, Ser-85, Lys-114, Arg-120, and Arg-129.

Belongs to the sorting nexin family.

Its subcellular location is the cytoplasm. The protein localises to the golgi apparatus membrane. The protein resides in the prevacuolar compartment membrane. Functionally, required for retention of late Golgi membrane proteins. Component of the retrieval machinery that functions by direct interaction with the cytosolic tails of certain TGN membrane proteins during the sorting/budding process at the prevacuolar compartment. Binds phosphatidylinositol 3-phosphate (PtdIns(P3)). The polypeptide is Sorting nexin-3 (SNX3) (Kluyveromyces lactis (strain ATCC 8585 / CBS 2359 / DSM 70799 / NBRC 1267 / NRRL Y-1140 / WM37) (Yeast)).